A 474-amino-acid polypeptide reads, in one-letter code: Bifunctional protein HldE (474 aa).

The segment at 1–318 (MKLSMPRFDQ…RAIQREEGSE (318 aa)) is ribokinase. 194-197 (NLSE) provides a ligand contact to ATP. The active site involves D263. Residues 343–474 (FTNGCFDILH…AIVEKIRKSE (132 aa)) are cytidylyltransferase.

In the N-terminal section; belongs to the carbohydrate kinase PfkB family. It in the C-terminal section; belongs to the cytidylyltransferase family. Homodimer.

The catalysed reaction is D-glycero-beta-D-manno-heptose 7-phosphate + ATP = D-glycero-beta-D-manno-heptose 1,7-bisphosphate + ADP + H(+). It catalyses the reaction D-glycero-beta-D-manno-heptose 1-phosphate + ATP + H(+) = ADP-D-glycero-beta-D-manno-heptose + diphosphate. Its pathway is nucleotide-sugar biosynthesis; ADP-L-glycero-beta-D-manno-heptose biosynthesis; ADP-L-glycero-beta-D-manno-heptose from D-glycero-beta-D-manno-heptose 7-phosphate: step 1/4. It participates in nucleotide-sugar biosynthesis; ADP-L-glycero-beta-D-manno-heptose biosynthesis; ADP-L-glycero-beta-D-manno-heptose from D-glycero-beta-D-manno-heptose 7-phosphate: step 3/4. Functionally, catalyzes the phosphorylation of D-glycero-D-manno-heptose 7-phosphate at the C-1 position to selectively form D-glycero-beta-D-manno-heptose-1,7-bisphosphate. Catalyzes the ADP transfer from ATP to D-glycero-beta-D-manno-heptose 1-phosphate, yielding ADP-D-glycero-beta-D-manno-heptose. The sequence is that of Bifunctional protein HldE from Pseudomonas fluorescens (strain Pf0-1).